The following is a 760-amino-acid chain: Xaa-Pro dipeptidyl-peptidase (760 aa).

Catalysis depends on charge relay system residues S349, D469, and H499.

This sequence belongs to the peptidase S15 family. In terms of assembly, homodimer.

It is found in the cytoplasm. It carries out the reaction Hydrolyzes Xaa-Pro-|- bonds to release unblocked, N-terminal dipeptides from substrates including Ala-Pro-|-p-nitroanilide and (sequentially) Tyr-Pro-|-Phe-Pro-|-Gly-Pro-|-Ile.. Functionally, removes N-terminal dipeptides sequentially from polypeptides having unsubstituted N-termini provided that the penultimate residue is proline. In Streptococcus pyogenes serotype M49 (strain NZ131), this protein is Xaa-Pro dipeptidyl-peptidase.